The primary structure comprises 362 residues: Epoxyqueuosine reductase (362 aa).

Aspartate 143 acts as the Proton donor in catalysis. Residues 191–220 (PDSPKHQDSCGKCQACIKLCPTGAIQPGKM) enclose the 4Fe-4S ferredoxin-type domain. Cysteine 200, cysteine 203, cysteine 206, cysteine 210, cysteine 226, cysteine 253, cysteine 256, and cysteine 260 together coordinate [4Fe-4S] cluster.

The protein belongs to the QueG family. Monomer. It depends on cob(II)alamin as a cofactor. Requires [4Fe-4S] cluster as cofactor.

The protein resides in the cytoplasm. It carries out the reaction epoxyqueuosine(34) in tRNA + AH2 = queuosine(34) in tRNA + A + H2O. Its pathway is tRNA modification; tRNA-queuosine biosynthesis. Its function is as follows. Catalyzes the conversion of epoxyqueuosine (oQ) to queuosine (Q), which is a hypermodified base found in the wobble positions of tRNA(Asp), tRNA(Asn), tRNA(His) and tRNA(Tyr). The sequence is that of Epoxyqueuosine reductase from Francisella cf. novicida (strain Fx1).